The primary structure comprises 111 residues: Nucleoid-associated protein Tmel_0542 (111 aa).

This sequence belongs to the YbaB/EbfC family. In terms of assembly, homodimer.

It localises to the cytoplasm. It is found in the nucleoid. Binds to DNA and alters its conformation. May be involved in regulation of gene expression, nucleoid organization and DNA protection. The protein is Nucleoid-associated protein Tmel_0542 of Thermosipho melanesiensis (strain DSM 12029 / CIP 104789 / BI429).